Here is a 597-residue protein sequence, read N- to C-terminus: Phosphoinositide phospholipase C 4 (597 aa).

Positions 26–60 (GPVEDVRDLFEKYTEGDAHMSPEQLQKLMTEEGGE) constitute an EF-hand domain. The 144-residue stretch at 114 to 257 (QNMDAPLSHY…LKEKILISTK (144 aa)) folds into the PI-PLC X-box domain. Active-site residues include histidine 129 and histidine 174. The segment covering 259–290 (PKEYLEANDTKEKDNGEKGKDSDEDVWGKEPE) has biased composition (basic and acidic residues). The segment at 259-324 (PKEYLEANDT…ERGSCESDTS (66 aa)) is disordered. The segment covering 293–309 (ISTQSDLDKVTSSVNDL) has biased composition (polar residues). The region spanning 333–449 (KRLIAIHAGK…GYVKKPDFLM (117 aa)) is the PI-PLC Y-box domain. The region spanning 449 to 579 (MDASPNGQDF…QGIRAVPLFN (131 aa)) is the C2 domain.

The cofactor is Ca(2+). In terms of tissue distribution, low expression in leaves, roots, flowers and siliques. Expressed in pollen and in cells of the stigma surface.

It is found in the cytoplasm. The protein resides in the cytosol. The protein localises to the cell membrane. The catalysed reaction is a 1,2-diacyl-sn-glycero-3-phospho-(1D-myo-inositol-4,5-bisphosphate) + H2O = 1D-myo-inositol 1,4,5-trisphosphate + a 1,2-diacyl-sn-glycerol + H(+). The production of the second messenger molecules diacylglycerol (DAG) and inositol 1,4,5-trisphosphate (IP3) is mediated by activated phosphatidylinositol-specific phospholipase C enzymes. The sequence is that of Phosphoinositide phospholipase C 4 (PLC4) from Arabidopsis thaliana (Mouse-ear cress).